The primary structure comprises 641 residues: tRNA 5-methylaminomethyl-2-thiouridine biosynthesis bifunctional protein MnmC (641 aa).

A tRNA (mnm(5)s(2)U34)-methyltransferase region spans residues Met-1–Thr-219. The segment at Ile-232 to Val-641 is FAD-dependent cmnm(5)s(2)U34 oxidoreductase.

This sequence in the N-terminal section; belongs to the methyltransferase superfamily. tRNA (mnm(5)s(2)U34)-methyltransferase family. It in the C-terminal section; belongs to the DAO family. Requires FAD as cofactor.

Its subcellular location is the cytoplasm. The enzyme catalyses 5-aminomethyl-2-thiouridine(34) in tRNA + S-adenosyl-L-methionine = 5-methylaminomethyl-2-thiouridine(34) in tRNA + S-adenosyl-L-homocysteine + H(+). Functionally, catalyzes the last two steps in the biosynthesis of 5-methylaminomethyl-2-thiouridine (mnm(5)s(2)U) at the wobble position (U34) in tRNA. Catalyzes the FAD-dependent demodification of cmnm(5)s(2)U34 to nm(5)s(2)U34, followed by the transfer of a methyl group from S-adenosyl-L-methionine to nm(5)s(2)U34, to form mnm(5)s(2)U34. The protein is tRNA 5-methylaminomethyl-2-thiouridine biosynthesis bifunctional protein MnmC of Shewanella pealeana (strain ATCC 700345 / ANG-SQ1).